The following is a 671-amino-acid chain: DNA ligase (671 aa).

NAD(+) contacts are provided by residues 31-35, 80-81, and E110; these read DAEYD and SL. Residue K112 is the N6-AMP-lysine intermediate of the active site. R133, E167, K283, and K307 together coordinate NAD(+). C401, C404, C419, and C424 together coordinate Zn(2+). The BRCT domain occupies 587–671; sequence EEELVFAGKT…YLPDEGGLNE (85 aa).

The protein belongs to the NAD-dependent DNA ligase family. LigA subfamily. Mg(2+) is required as a cofactor. It depends on Mn(2+) as a cofactor.

The catalysed reaction is NAD(+) + (deoxyribonucleotide)n-3'-hydroxyl + 5'-phospho-(deoxyribonucleotide)m = (deoxyribonucleotide)n+m + AMP + beta-nicotinamide D-nucleotide.. DNA ligase that catalyzes the formation of phosphodiester linkages between 5'-phosphoryl and 3'-hydroxyl groups in double-stranded DNA using NAD as a coenzyme and as the energy source for the reaction. It is essential for DNA replication and repair of damaged DNA. The protein is DNA ligase of Listeria monocytogenes serotype 4b (strain CLIP80459).